The following is a 377-amino-acid chain: MSRGIIIIGSGFAARQLVKNIRKQDAHVPLTLIAADSMDEYNKPDLSHVISQSQRADDLTRQLAGEFAEQFNLRLFPHTWVADIDADAHVVKSQDKQWQYDKLVLATGATAFVPPIAGRELMLTLNSQQEYRACETQLRDAQRVLIVGGGLIGSELAMDFCRAGKTVTLMDNAASLLASLMPPEVSSRLQHHLTDMGVHLLLKSQLQKLEKTEAGIRATLVSQHSIEVDAVIAATGLRPETALARRAGVVVNRGVCVDSYLQTSHPDIYAIGDCAEINGQVLPFLQPIQLSAMYLAKNLLGGNAPLKLPAMLVKVKTPELPLHLAGETQRRDLSWQITAESDGMIAKGMSGEGQLRAFVVSEDRMKEAFALLKTLSV.

This sequence belongs to the FAD-dependent oxidoreductase family. FAD serves as cofactor.

The protein localises to the cytoplasm. It catalyses the reaction 2 reduced [nitric oxide reductase rubredoxin domain] + NAD(+) + H(+) = 2 oxidized [nitric oxide reductase rubredoxin domain] + NADH. It functions in the pathway nitrogen metabolism; nitric oxide reduction. One of at least two accessory proteins for anaerobic nitric oxide (NO) reductase. Reduces the rubredoxin moiety of NO reductase. This Salmonella newport (strain SL254) protein is Nitric oxide reductase FlRd-NAD(+) reductase.